The chain runs to 140 residues: Endoribonuclease YbeY (140 aa).

Zn(2+) is bound by residues H100, H104, and H110.

This sequence belongs to the endoribonuclease YbeY family. It depends on Zn(2+) as a cofactor.

It localises to the cytoplasm. Functionally, single strand-specific metallo-endoribonuclease involved in late-stage 70S ribosome quality control and in maturation of the 3' terminus of the 16S rRNA. The polypeptide is Endoribonuclease YbeY (Helicobacter pylori (strain Shi470)).